The primary structure comprises 764 residues: Thyrotropin receptor (764 aa).

The N-terminal stretch at 1–20 (MRPADLLQLVLLLDLPRDLG) is a signal peptide. Residues 21 to 413 (GMGCSSPPCE…EFNPCEDIMG (393 aa)) are Extracellular-facing. Cysteine 31 and cysteine 41 form a disulfide bridge. Asparagine 77, asparagine 99, and asparagine 113 each carry an N-linked (GlcNAc...) asparagine glycan. LRR repeat units lie at residues 100 to 124 (LSKV…ALKE), 125 to 150 (LPLL…VYST), 152 to 174 (IFFI…AFQG), 176 to 199 (CNET…AFNG), 200 to 223 (TKLD…AFGG), 227 to 248 (GPSL…GLEH), and 250 to 271 (KELI…SFLH). N-linked (GlcNAc...) asparagine glycans are attached at residues asparagine 177 and asparagine 198. Asparagine 302 is a glycosylation site (N-linked (GlcNAc...) asparagine). Tyrosine 385 is modified (sulfotyrosine). Residues 414-441 (YKFLRIVVWFVSLLALLGNVFVLLILLT) traverse the membrane as a helical segment. Residues 442-450 (SHYKLNVPR) are Cytoplasmic-facing. The helical transmembrane segment at 451 to 473 (FLMCNLAFADFCMGMYLLLIASV) threads the bilayer. Topologically, residues 474–494 (DLYTHSEYYNHAIDWQTGPGC) are extracellular. An intrachain disulfide couples cysteine 494 to cysteine 569. The helical transmembrane segment at 495 to 517 (NTAGFFTVFASELSVYTLTVITL) threads the bilayer. Over 518–537 (ERWYAITFAMRLDRKIRLRH) the chain is Cytoplasmic. The chain crosses the membrane as a helical span at residues 538–560 (ACAIMVGGWVCCFLLALLPLVGI). Residues 561 to 580 (SSYAKVSICLPMDTETPLAL) are Extracellular-facing. The chain crosses the membrane as a helical span at residues 581–602 (AYIVFVLTLNIVAFVIVCCCYV). The Cytoplasmic segment spans residues 603–625 (KIYITVRNPQYNPGDKDTKIAKR). A helical membrane pass occupies residues 626–649 (MAVLIFTDFICMAPISFYALSAIL). Residues 650-660 (NKPLITVSNSK) are Extracellular-facing. The helical transmembrane segment at 661–682 (ILLVLFYPLNSCANPFLYAIFT) threads the bilayer. Topologically, residues 683–764 (KAFQRDVFIL…ISEEYMQTVL (82 aa)) are cytoplasmic. The short motif at 762 to 764 (TVL) is the PDZ-binding element.

The protein belongs to the G-protein coupled receptor 1 family. FSH/LSH/TSH subfamily. Interacts with heterodimer GPHA2:GPHB5; this interaction stimulates cAMP production. Interacts (via the PDZ-binding motif) with SCRIB; regulates TSHR trafficking and function. In terms of processing, glycosylated. Sulfated. Sulfation on Tyr-385 plays a role in thyrotropin receptor binding and activation. Expressed in thyroide cells (at protein level). Expressed in the thyroid.

The protein resides in the cell membrane. The protein localises to the basolateral cell membrane. Its function is as follows. Receptor for the thyroid-stimulating hormone (TSH) or thyrotropin. Also acts as a receptor for the heterodimeric glycoprotein hormone (GPHA2:GPHB5) or thyrostimulin. The activity of this receptor is mediated by G proteins which activate adenylate cyclase. Plays a central role in controlling thyroid cell metabolism. The chain is Thyrotropin receptor (TSHR) from Homo sapiens (Human).